We begin with the raw amino-acid sequence, 610 residues long: Elongation factor 4 (610 aa).

The region spanning 11 to 193 (KYIRNFSIVA…QIVTKIPAPA (183 aa)) is the tr-type G domain. GTP is bound by residues 23-28 (DHGKST) and 140-143 (NKID).

It belongs to the TRAFAC class translation factor GTPase superfamily. Classic translation factor GTPase family. LepA subfamily.

Its subcellular location is the cell membrane. The catalysed reaction is GTP + H2O = GDP + phosphate + H(+). Required for accurate and efficient protein synthesis under certain stress conditions. May act as a fidelity factor of the translation reaction, by catalyzing a one-codon backward translocation of tRNAs on improperly translocated ribosomes. Back-translocation proceeds from a post-translocation (POST) complex to a pre-translocation (PRE) complex, thus giving elongation factor G a second chance to translocate the tRNAs correctly. Binds to ribosomes in a GTP-dependent manner. The protein is Elongation factor 4 of Levilactobacillus brevis (strain ATCC 367 / BCRC 12310 / CIP 105137 / JCM 1170 / LMG 11437 / NCIMB 947 / NCTC 947) (Lactobacillus brevis).